The chain runs to 398 residues: Arginine biosynthesis bifunctional protein ArgJ (398 aa).

Substrate is bound by residues threonine 148, lysine 174, threonine 185, glutamate 271, asparagine 393, and threonine 398. Threonine 185 (nucleophile) is an active-site residue.

The protein belongs to the ArgJ family. Heterotetramer of two alpha and two beta chains.

The protein localises to the cytoplasm. The enzyme catalyses N(2)-acetyl-L-ornithine + L-glutamate = N-acetyl-L-glutamate + L-ornithine. It catalyses the reaction L-glutamate + acetyl-CoA = N-acetyl-L-glutamate + CoA + H(+). The protein operates within amino-acid biosynthesis; L-arginine biosynthesis; L-ornithine and N-acetyl-L-glutamate from L-glutamate and N(2)-acetyl-L-ornithine (cyclic): step 1/1. It functions in the pathway amino-acid biosynthesis; L-arginine biosynthesis; N(2)-acetyl-L-ornithine from L-glutamate: step 1/4. Functionally, catalyzes two activities which are involved in the cyclic version of arginine biosynthesis: the synthesis of N-acetylglutamate from glutamate and acetyl-CoA as the acetyl donor, and of ornithine by transacetylation between N(2)-acetylornithine and glutamate. The protein is Arginine biosynthesis bifunctional protein ArgJ of Listeria monocytogenes serotype 4b (strain F2365).